The following is a 195-amino-acid chain: Imidazoleglycerol-phosphate dehydratase (195 aa).

Belongs to the imidazoleglycerol-phosphate dehydratase family.

Its subcellular location is the cytoplasm. The catalysed reaction is D-erythro-1-(imidazol-4-yl)glycerol 3-phosphate = 3-(imidazol-4-yl)-2-oxopropyl phosphate + H2O. It participates in amino-acid biosynthesis; L-histidine biosynthesis; L-histidine from 5-phospho-alpha-D-ribose 1-diphosphate: step 6/9. The polypeptide is Imidazoleglycerol-phosphate dehydratase (Pelotomaculum thermopropionicum (strain DSM 13744 / JCM 10971 / SI)).